Here is a 248-residue protein sequence, read N- to C-terminus: Ribosomal RNA small subunit methyltransferase J (248 aa).

S-adenosyl-L-methionine contacts are provided by residues R98–D99, E114–R115, S150–S151, and D168.

It belongs to the methyltransferase superfamily. RsmJ family.

It is found in the cytoplasm. It catalyses the reaction guanosine(1516) in 16S rRNA + S-adenosyl-L-methionine = N(2)-methylguanosine(1516) in 16S rRNA + S-adenosyl-L-homocysteine + H(+). Specifically methylates the guanosine in position 1516 of 16S rRNA. This Shewanella baltica (strain OS185) protein is Ribosomal RNA small subunit methyltransferase J.